Here is a 64-residue protein sequence, read N- to C-terminus: Large ribosomal subunit protein uL30 (64 aa).

Part of the 50S ribosomal subunit. The protein is methylated on either Ala-2 or Lys-3.

This Rhodopseudomonas palustris (strain ATCC BAA-98 / CGA009) protein is Large ribosomal subunit protein uL30.